Consider the following 150-residue polypeptide: Ribosome-binding factor A (150 aa).

The disordered stretch occupies residues 131–150; that stretch reads LSHDDDEDGGADEAPRNGDE.

It belongs to the RbfA family. As to quaternary structure, monomer. Binds 30S ribosomal subunits, but not 50S ribosomal subunits or 70S ribosomes.

It localises to the cytoplasm. In terms of biological role, one of several proteins that assist in the late maturation steps of the functional core of the 30S ribosomal subunit. Associates with free 30S ribosomal subunits (but not with 30S subunits that are part of 70S ribosomes or polysomes). Required for efficient processing of 16S rRNA. May interact with the 5'-terminal helix region of 16S rRNA. The sequence is that of Ribosome-binding factor A from Brucella melitensis biotype 2 (strain ATCC 23457).